Reading from the N-terminus, the 862-residue chain is Valine--tRNA ligase (862 aa).

The short motif at 44–53 is the 'HIGH' region element; the sequence is NVTGSLHMGH. Residues C176, C179, C344, C347, C417, C420, C438, and C441 each coordinate Zn(2+). The 'KMSKS' region signature appears at 528-532; that stretch reads KMSKS. K531 is a binding site for ATP. Residues 802–862 adopt a coiled-coil conformation; that stretch reads RRRQEKRLKE…RIREALSQIG (61 aa).

The protein belongs to the class-I aminoacyl-tRNA synthetase family. ValS type 1 subfamily. Monomer. Requires Zn(2+) as cofactor.

It localises to the cytoplasm. The catalysed reaction is tRNA(Val) + L-valine + ATP = L-valyl-tRNA(Val) + AMP + diphosphate. Catalyzes the attachment of valine to tRNA(Val). As ValRS can inadvertently accommodate and process structurally similar amino acids such as threonine, to avoid such errors, it has a 'posttransfer' editing activity that hydrolyzes mischarged Thr-tRNA(Val) in a tRNA-dependent manner. The protein is Valine--tRNA ligase of Thermus thermophilus (strain ATCC 27634 / DSM 579 / HB8).